The chain runs to 253 residues: MTLKRIFCAALALIVLQSVASAVDYCRLSCPEGRDHVGCRNAGFGAHCGSNPQTPKLHQEHIKMVLQKTNWLRGVVAEGSFCYPKAARMPVLVWDDDLANLASLHTKGCVTETNKCRSTERFHSPGQSSYEISGDTLPSAMDILNFALRDWYLQKDNLTRKDIGSYPAGEDKGLKNMANLISDKVTAIGCGLTHWEEGKLKRALFTCNFSSSNVPGHPIYQRGDNFATKCAKTHPYYKSLCNSDEHIKPNNNV.

Residues 1 to 22 (MTLKRIFCAALALIVLQSVASA) form the signal peptide. The region spanning 66–209 (LQKTNWLRGV…LKRALFTCNF (144 aa)) is the SCP domain. The Cell attachment site motif lies at 222–224 (RGD).

Belongs to the CRISP family. As to expression, expressed in salivary glands.

It localises to the secreted. Functionally, inhibits platelet aggregation induced by all agonists tested (ADP, arachidonic acid, the thromboxane A2 analog U46619, thrombin, and snake venom snaclecs (TMVA that activates platelet through GPIB, and stejnulxin that specifically acts through GPVI (GP6))). May act by competing with fibrinogen for binding to glycoprotein IIb/IIIa (ITGA2B/ITGB3). The sequence is that of Tabinhibitin 3 from Tabanus yao (Horsefly).